The sequence spans 593 residues: Auxin response factor 12 (593 aa).

The segment at residues Phe-126–Arg-228 is a DNA-binding region (TF-B3). The PB1 domain occupies Arg-511–Arg-592.

It belongs to the ARF family. Homodimers and heterodimers.

Its subcellular location is the nucleus. Its function is as follows. Auxin response factors (ARFs) are transcriptional factors that bind specifically to the DNA sequence 5'-TGTCTC-3' found in the auxin-responsive promoter elements (AuxREs). Could act as transcriptional activator or repressor. Formation of heterodimers with Aux/IAA proteins may alter their ability to modulate early auxin response genes expression. This chain is Auxin response factor 12 (ARF12), found in Arabidopsis thaliana (Mouse-ear cress).